Consider the following 86-residue polypeptide: Elongation factor 1-beta (86 aa).

Belongs to the EF-1-beta/EF-1-delta family.

Promotes the exchange of GDP for GTP in EF-1-alpha/GDP, thus allowing the regeneration of EF-1-alpha/GTP that could then be used to form the ternary complex EF-1-alpha/GTP/AAtRNA. The sequence is that of Elongation factor 1-beta from Methanocorpusculum labreanum (strain ATCC 43576 / DSM 4855 / Z).